The primary structure comprises 262 residues: Global transcriptional regulator CodY (262 aa).

The GAF domain stretch occupies residues 1–159; it reads MAHLLEKTRK…ASTVVGIQLL (159 aa). Residues 207–226 constitute a DNA-binding region (H-T-H motif); it reads ASVIADRIGITRSVIVNALR.

It belongs to the CodY family.

It is found in the cytoplasm. Functionally, DNA-binding global transcriptional regulator which is involved in the adaptive response to starvation and acts by directly or indirectly controlling the expression of numerous genes in response to nutrient availability. During rapid exponential growth, CodY is highly active and represses genes whose products allow adaptation to nutrient depletion. This is Global transcriptional regulator CodY from Streptococcus pneumoniae (strain JJA).